A 313-amino-acid polypeptide reads, in one-letter code: Intelectin-1 (313 aa).

A signal peptide spans 1–18; sequence MNQLSFLLFLIATTRGWS. A Fibrinogen C-terminal domain is found at 32-255; sequence SSSPSLPRSC…AANALCAGMR (224 aa). Cys41 and Cys70 form a disulfide bridge. Ca(2+) is bound by residues His86, Glu87, Asp89, Gly92, Gly97, Asp98, and Asp133. 3 disulfide bridges follow: Cys94/Cys280, Cys199/Cys259, and Cys251/Cys265. N-linked (GlcNAc...) asparagine glycosylation is present at Asn163. Positions 260, 262, 274, and 282 each coordinate Ca(2+). A carbohydrate is bound by residues 262-263 and Glu274; that span reads EH. Ser298 carries GPI-anchor amidated serine lipidation. Positions 299-313 are excised as a propeptide; it reads SSREITEAAVLLFYR.

In terms of assembly, homotrimer; disulfide-linked. May interact with LTF. In terms of processing, N-glycosylated. As to expression, highly expressed in omental adipose tissue where it is found in stromal vascular cells but not in fat cells but is barely detectable in subcutaneous adipose tissue (at protein level). Highly expressed in the small intestine. Also found in the heart, testis, colon, salivary gland, skeletal muscle, pancreas and thyroid and, to a lesser degree, in the uterus, spleen, prostate, lymph node and thymus.

The protein resides in the cell membrane. It is found in the secreted. In terms of biological role, lectin that specifically recognizes microbial carbohydrate chains in a calcium-dependent manner. Binds to microbial glycans that contain a terminal acyclic 1,2-diol moiety, including beta-linked D-galactofuranose (beta-Galf), D-phosphoglycerol-modified glycans, D-glycero-D-talo-oct-2-ulosonic acid (KO) and 3-deoxy-D-manno-oct-2-ulosonic acid (KDO). Binds to glycans from Gram-positive and Gram-negative bacteria, including K.pneumoniae, S.pneumoniae, Y.pestis, P.mirabilis and P.vulgaris. Does not bind human glycans. Probably plays a role in the defense system against microorganisms. May function as adipokine that has no effect on basal glucose uptake but enhances insulin-stimulated glucose uptake in adipocytes. Increases AKT phosphorylation in the absence and presence of insulin. May interact with lactoferrin/LTF and increase its uptake, and may thereby play a role in iron absorption. The sequence is that of Intelectin-1 (ITLN1) from Homo sapiens (Human).